The chain runs to 410 residues: Probable tRNA sulfurtransferase (410 aa).

Positions 58–167 (AELTRRLQEV…RREIFVSVER (110 aa)) constitute a THUMP domain. Residues 185-186 (LL), 210-211 (HF), Arg267, Gly289, and Gln298 each bind ATP.

Belongs to the ThiI family.

It localises to the cytoplasm. It catalyses the reaction [ThiI sulfur-carrier protein]-S-sulfanyl-L-cysteine + a uridine in tRNA + 2 reduced [2Fe-2S]-[ferredoxin] + ATP + H(+) = [ThiI sulfur-carrier protein]-L-cysteine + a 4-thiouridine in tRNA + 2 oxidized [2Fe-2S]-[ferredoxin] + AMP + diphosphate. It carries out the reaction [ThiS sulfur-carrier protein]-C-terminal Gly-Gly-AMP + S-sulfanyl-L-cysteinyl-[cysteine desulfurase] + AH2 = [ThiS sulfur-carrier protein]-C-terminal-Gly-aminoethanethioate + L-cysteinyl-[cysteine desulfurase] + A + AMP + 2 H(+). It participates in cofactor biosynthesis; thiamine diphosphate biosynthesis. Its function is as follows. Catalyzes the ATP-dependent transfer of a sulfur to tRNA to produce 4-thiouridine in position 8 of tRNAs, which functions as a near-UV photosensor. Also catalyzes the transfer of sulfur to the sulfur carrier protein ThiS, forming ThiS-thiocarboxylate. This is a step in the synthesis of thiazole, in the thiamine biosynthesis pathway. The sulfur is donated as persulfide by IscS. The chain is Probable tRNA sulfurtransferase from Nocardia farcinica (strain IFM 10152).